Reading from the N-terminus, the 867-residue chain is MLRYTRNYRLHNVASSLILKRTAIIPSLQGLRRGNFSQDDTTNLNNKKRRKRKVTSISLDDLNSVNLKKVNTKELEFKVRQLKEFTKNLKAQIKRSESRNEKRETEDDIDLEEINKDADSVFENLSNHERRKNHKVQNHLGIPIGNSQNQSTNLSSLILGSSLEQAQKFLPSTLVTRLNDNNLVLKCLTDKTRQNWNPIIKSISKNREGLNGIGKNKLNSTLLSSVKGLYFDNIERLDKMLLEYVDNDITKFTTEMYLSLFENLSNIKLTDPNMSNEVIVKMKELLERYDEALIKGTDTKMTQYILNNGIKFASKLNNHEHMEYFLTKFKGYGIIPNRINYTTVLQYYIRMGISKKSWDIFDTMKFLSKEHAPDLIAYNSVLTLCSRDKDYSKALDIYNEMVNSGINPGTSTRTIMAKILAIASRDSFTSEGKSESLRLLGWKFIHEIIETTGSKLSHKSLESMIALAAYDGDVGMSRALYHCYVTTKYRNVVQNWVGKRDYVKIWKSVLDPRMLNYLFLAYSNYNSNKLPLLLGYEQGILLRRNIINSVDYSGRSEFDDDLGVLLPFLPVTEIKHNWELLAESRAIWHFNLEYGGSTSLRSTSESIVDKSTIMTAVENSKTIDDFKWNIFSKIHELKSQTINTDVLNSIVLNTYLTIPIKLHDKKEFVLRLKEFTFQQHDFDSKIESFYLESNNKMVEDNDKNSSSPSTSEDTSIELAEDPNDLLAHYILSLKHKILANCSTYELTMKAASKFNDIKLATEAWEERGKFRKSSSFQKLAQNNRMESDTKFAELMVAFFSSQKMYTDALHVVMSSKRYIDWKYPMVKNLHRGLLEIEDSRSIDILLDIVNRKSKVQTIEETISSLTL.

The transit peptide at 1–96 (MLRYTRNYRL…KNLKAQIKRS (96 aa)) directs the protein to the mitochondrion. PPR repeat units lie at residues 337–371 (NRIN…SKEH) and 374–408 (DLIA…GINP).

It belongs to the CCM1 family. As to quaternary structure, binds to mitochondrial small subunit 15S rRNA.

It is found in the mitochondrion. In terms of biological role, regulates mitochondrial small subunit maturation by controlling 15S rRNA 5'-end processing. Localizes to the 5' precursor of the 15S rRNA in a position that is subsequently occupied by mS47 in the mature yeast mtSSU. Uses structure and sequence-specific RNA recognition, binding to a single-stranded region of the precursor and specifically recognizing bases -6 to -1. The exchange of Ccm1 for mS47 is coupled to the irreversible removal of precursor rRNA that is accompanied by conformational changes of the mitoribosomal proteins uS5m and mS26. These conformational changes signal completion of 5'-end rRNA processing through protection of the mature 5'-end of the 15S rRNA and stabilization of mS47. The removal of the 5' precursor together with the dissociation of Ccm1 may be catalyzed by the 5'-3' exoribonuclease Pet127. Involved in the specific removal of group I introns in mitochondrial encoded transcripts. In Vanderwaltozyma polyspora (strain ATCC 22028 / DSM 70294 / BCRC 21397 / CBS 2163 / NBRC 10782 / NRRL Y-8283 / UCD 57-17) (Kluyveromyces polysporus), this protein is Mitochondrial 15S rRNA processing factor CCM1 (CCM1).